Here is a 301-residue protein sequence, read N- to C-terminus: Recombination-associated protein RdgC (301 aa).

It belongs to the RdgC family.

The protein resides in the cytoplasm. The protein localises to the nucleoid. In terms of biological role, may be involved in recombination. The polypeptide is Recombination-associated protein RdgC (Pseudoalteromonas atlantica (strain T6c / ATCC BAA-1087)).